Here is a 210-residue protein sequence, read N- to C-terminus: LexA repressor (210 aa).

A DNA-binding region (H-T-H motif) is located at residues 28–48 (FEEIAEGMGLSSLATVHKHIG). Active-site for autocatalytic cleavage activity residues include S131 and K169.

It belongs to the peptidase S24 family. As to quaternary structure, homodimer.

The catalysed reaction is Hydrolysis of Ala-|-Gly bond in repressor LexA.. Represses a number of genes involved in the response to DNA damage (SOS response), including recA and lexA. In the presence of single-stranded DNA, RecA interacts with LexA causing an autocatalytic cleavage which disrupts the DNA-binding part of LexA, leading to derepression of the SOS regulon and eventually DNA repair. The sequence is that of LexA repressor from Koribacter versatilis (strain Ellin345).